Consider the following 399-residue polypeptide: Succinate--CoA ligase [ADP-forming] subunit beta (399 aa).

In terms of domain architecture, ATP-grasp spans 9-254 (KALLREFGVP…ESEEDAKEIE (246 aa)). Residues K46, 53–55 (GRG), E109, S112, and E117 each bind ATP. N209 and D223 together coordinate Mg(2+). Substrate contacts are provided by residues N274 and 331–333 (GIM).

The protein belongs to the succinate/malate CoA ligase beta subunit family. Heterotetramer of two alpha and two beta subunits. The cofactor is Mg(2+).

It catalyses the reaction succinate + ATP + CoA = succinyl-CoA + ADP + phosphate. The enzyme catalyses GTP + succinate + CoA = succinyl-CoA + GDP + phosphate. Its pathway is carbohydrate metabolism; tricarboxylic acid cycle; succinate from succinyl-CoA (ligase route): step 1/1. In terms of biological role, succinyl-CoA synthetase functions in the citric acid cycle (TCA), coupling the hydrolysis of succinyl-CoA to the synthesis of either ATP or GTP and thus represents the only step of substrate-level phosphorylation in the TCA. The beta subunit provides nucleotide specificity of the enzyme and binds the substrate succinate, while the binding sites for coenzyme A and phosphate are found in the alpha subunit. The protein is Succinate--CoA ligase [ADP-forming] subunit beta of Nitrobacter winogradskyi (strain ATCC 25391 / DSM 10237 / CIP 104748 / NCIMB 11846 / Nb-255).